The following is a 650-amino-acid chain: Gamma-tubulin complex component 4 homolog (650 aa).

Ser-214 is modified (phosphoserine). Residue Thr-216 is modified to Phosphothreonine. Ser-218 is modified (phosphoserine).

It belongs to the TUBGCP family.

It localises to the cytoplasm. The protein resides in the cytoskeleton. The protein localises to the microtubule organizing center. It is found in the centrosome. Its function is as follows. Gamma-tubulin complex is necessary for microtubule nucleation at the centrosome. The polypeptide is Gamma-tubulin complex component 4 homolog (Grip75) (Drosophila melanogaster (Fruit fly)).